Consider the following 238-residue polypeptide: Phosphoribosylaminoimidazole-succinocarboxamide synthase (238 aa).

This sequence belongs to the SAICAR synthetase family.

The enzyme catalyses 5-amino-1-(5-phospho-D-ribosyl)imidazole-4-carboxylate + L-aspartate + ATP = (2S)-2-[5-amino-1-(5-phospho-beta-D-ribosyl)imidazole-4-carboxamido]succinate + ADP + phosphate + 2 H(+). Its pathway is purine metabolism; IMP biosynthesis via de novo pathway; 5-amino-1-(5-phospho-D-ribosyl)imidazole-4-carboxamide from 5-amino-1-(5-phospho-D-ribosyl)imidazole-4-carboxylate: step 1/2. The chain is Phosphoribosylaminoimidazole-succinocarboxamide synthase from Chlorobium phaeovibrioides (strain DSM 265 / 1930) (Prosthecochloris vibrioformis (strain DSM 265)).